A 194-amino-acid chain; its full sequence is Ion-translocating oxidoreductase complex subunit A (194 aa).

Transmembrane regions (helical) follow at residues 4-24 (LALI…QFLG), 39-59 (IGLS…SYIL), 71-91 (FLRT…TEML), 102-122 (VLGI…VALL), 135-155 (TTQG…FAAL), and 172-192 (AIGM…SGLI).

Belongs to the NqrDE/RnfAE family. As to quaternary structure, the complex is composed of six subunits: RnfA, RnfB, RnfC, RnfD, RnfE and RnfG.

The protein resides in the cell inner membrane. In terms of biological role, part of a membrane-bound complex that couples electron transfer with translocation of ions across the membrane. The sequence is that of Ion-translocating oxidoreductase complex subunit A from Pseudomonas paraeruginosa (strain DSM 24068 / PA7) (Pseudomonas aeruginosa (strain PA7)).